A 127-amino-acid polypeptide reads, in one-letter code: Aspartate 1-decarboxylase (127 aa).

Catalysis depends on Ser25, which acts as the Schiff-base intermediate with substrate; via pyruvic acid. A Pyruvic acid (Ser) modification is found at Ser25. Thr57 contributes to the substrate binding site. Residue Tyr58 is the Proton donor of the active site. A substrate-binding site is contributed by 73–75 (GAA).

Belongs to the PanD family. As to quaternary structure, heterooctamer of four alpha and four beta subunits. The cofactor is pyruvate. Is synthesized initially as an inactive proenzyme, which is activated by self-cleavage at a specific serine bond to produce a beta-subunit with a hydroxyl group at its C-terminus and an alpha-subunit with a pyruvoyl group at its N-terminus.

The protein resides in the cytoplasm. It carries out the reaction L-aspartate + H(+) = beta-alanine + CO2. It participates in cofactor biosynthesis; (R)-pantothenate biosynthesis; beta-alanine from L-aspartate: step 1/1. Catalyzes the pyruvoyl-dependent decarboxylation of aspartate to produce beta-alanine. The chain is Aspartate 1-decarboxylase from Bacillus velezensis (strain DSM 23117 / BGSC 10A6 / LMG 26770 / FZB42) (Bacillus amyloliquefaciens subsp. plantarum).